A 193-amino-acid chain; its full sequence is Potassium-transporting ATPase KdpC subunit (193 aa).

The chain crosses the membrane as a helical span at residues 9–29 (VLMTVVTTVLLGLVYPLLITG).

It belongs to the KdpC family. The system is composed of three essential subunits: KdpA, KdpB and KdpC.

Its subcellular location is the cell inner membrane. Part of the high-affinity ATP-driven potassium transport (or Kdp) system, which catalyzes the hydrolysis of ATP coupled with the electrogenic transport of potassium into the cytoplasm. This subunit acts as a catalytic chaperone that increases the ATP-binding affinity of the ATP-hydrolyzing subunit KdpB by the formation of a transient KdpB/KdpC/ATP ternary complex. In Koribacter versatilis (strain Ellin345), this protein is Potassium-transporting ATPase KdpC subunit.